The chain runs to 512 residues: MHTVVVGTSGVTASDVLAVARGGARIELSGEAVTALAAARGIVDALAAKPEPVYGVSTGFGALATRHISQELRAQLQRNIVRSHAAGMGPRVEREVVRALMFLRLKTVCSGHTGVRPEVAQTMADILNAGITPVVHEYGSLGCSGDLAPLSHCALTLMGEGDAEGPDGTVRPAGDLLAEHGITPVELREKEGLALLNGTDGMLGMLVMALADLDALYKSADITAALSLEALLGTDKVLAPELHAIRPHPGQGASAANMLAVLAGSELTGHHQDDAPRVQDAYSVRCAPQVAGAGRDTLAHARLVAERELASAVDNPVVLPDGRVESNGNFHGAPVAYVLDFLAIAAADLGSIAERRTDRLLDKNRSHGLPPFLADDAGVDSGLMIAQYTQAALVSEMKRLAVPASADSIPSSAMQEDHVSMGWSAARKLRTAIDNLTRIVAIELYAATRAIELREGLTPAPASQAVITAVRKAGVEGPGPDRFLAPDLAAADAFVRDGSLVTAAETVTGPLA.

A cross-link (5-imidazolinone (Cys-Gly)) is located at residues 143-145 (CSG). Ser-144 carries the 2,3-didehydroalanine (Ser) modification.

It belongs to the PAL/histidase family. Post-translationally, contains an active site 4-methylidene-imidazol-5-one (MIO), which is formed autocatalytically by cyclization and dehydration of residues Cys-Ser-Gly.

It localises to the cytoplasm. It catalyses the reaction L-histidine = trans-urocanate + NH4(+). It functions in the pathway amino-acid degradation; L-histidine degradation into L-glutamate; N-formimidoyl-L-glutamate from L-histidine: step 1/3. This is Histidine ammonia-lyase from Streptomyces avermitilis (strain ATCC 31267 / DSM 46492 / JCM 5070 / NBRC 14893 / NCIMB 12804 / NRRL 8165 / MA-4680).